The primary structure comprises 398 residues: Na(+)/H(+) antiporter NhaA (398 aa).

The next 12 helical transmembrane spans lie at 8–28 (FLQL…LALI), 59–79 (LLLW…GMEI), 96–116 (LPVI…SFII), 124–144 (AGWA…LSLL), 154–174 (VFLL…IALF), 177–197 (AELH…LLML), 202–222 (VMLL…VLKS), 223–243 (GVHA…IRGA), 261–281 (YFIL…GLSW), 292–312 (IIVG…WLAV), 328–348 (LFGL…IGGL), and 362–382 (LGIL…LRNA).

It belongs to the NhaA Na(+)/H(+) (TC 2.A.33) antiporter family.

Its subcellular location is the cell inner membrane. The catalysed reaction is Na(+)(in) + 2 H(+)(out) = Na(+)(out) + 2 H(+)(in). Na(+)/H(+) antiporter that extrudes sodium in exchange for external protons. This chain is Na(+)/H(+) antiporter NhaA, found in Tolumonas auensis (strain DSM 9187 / NBRC 110442 / TA 4).